The chain runs to 72 residues: MSKEDHIEMEGKVIETLPNTTFRVQLDNGHVVIAHISGKMRKNYIRILTGDRVKVELTPYDLSKARITFRHR.

The S1-like domain maps to 1-72 (MSKEDHIEME…SKARITFRHR (72 aa)).

It belongs to the IF-1 family. In terms of assembly, component of the 30S ribosomal translation pre-initiation complex which assembles on the 30S ribosome in the order IF-2 and IF-3, IF-1 and N-formylmethionyl-tRNA(fMet); mRNA recruitment can occur at any time during PIC assembly.

It localises to the cytoplasm. One of the essential components for the initiation of protein synthesis. Stabilizes the binding of IF-2 and IF-3 on the 30S subunit to which N-formylmethionyl-tRNA(fMet) subsequently binds. Helps modulate mRNA selection, yielding the 30S pre-initiation complex (PIC). Upon addition of the 50S ribosomal subunit IF-1, IF-2 and IF-3 are released leaving the mature 70S translation initiation complex. The protein is Translation initiation factor IF-1 of Methylococcus capsulatus (strain ATCC 33009 / NCIMB 11132 / Bath).